We begin with the raw amino-acid sequence, 371 residues long: Transcriptional regulator of yeast form adherence 2 (371 aa).

A C3H1-type 1 zinc finger spans residues 16–44 (RNPAVLCSFYSKIGACRHGEKCSKKHLKP). The segment covering 94–107 (TVSQIDDSPHSNSG) has biased composition (polar residues). Residues 94–194 (TVSQIDDSPH…NIEDAKLEDT (101 aa)) are disordered. Over residues 115 to 124 (VETQEVETEN) the composition is skewed to acidic residues. The segment covering 132–194 (GDVKIDHNED…NIEDAKLEDT (63 aa)) has biased composition (basic and acidic residues). In terms of domain architecture, RRM spans 192–279 (EDTEKDKLPE…KPVYSDLSPV (88 aa)). The C3H1-type 2 zinc finger occupies 281–309 (DFNDACCEEYRDYHDCQRGAMCNYMHVRL). The disordered stretch occupies residues 337–371 (ELPGDIRSSSSTNDDETNGNENGISSTMAVLEQLS). Over residues 355 to 371 (GNENGISSTMAVLEQLS) the composition is skewed to polar residues.

The protein localises to the nucleus. In terms of biological role, transcription factor required for yeast cell adherence to silicone substrate. The sequence is that of Transcriptional regulator of yeast form adherence 2 (TRY2) from Candida albicans (strain SC5314 / ATCC MYA-2876) (Yeast).